We begin with the raw amino-acid sequence, 214 residues long: LOB domain-containing protein 7 (214 aa).

The LOB domain maps to 12–113 (TACAACKHQR…TELNLTRQQI (102 aa)).

The protein belongs to the LOB domain-containing protein family.

The protein is LOB domain-containing protein 7 (LBD7) of Arabidopsis thaliana (Mouse-ear cress).